Reading from the N-terminus, the 328-residue chain is dITP/XTP pyrophosphatase (328 aa).

The interval 1–129 (MSEKIYEYKD…ATSEQGFGDT (129 aa)) is unknown. Residues 130–324 (ILIATRNEGK…KLMEVFPAWQ (195 aa)) are NTP pyrophosphatase. 134–139 (TRNEGK) provides a ligand contact to substrate. Residue D196 is the Proton acceptor of the active site. Mg(2+) is bound at residue D196. Residues S197, 280–283 (FGYD), K303, and 308–309 (HR) each bind substrate.

The protein belongs to the HAM1 NTPase family. In terms of assembly, homodimer. Mg(2+) is required as a cofactor.

It catalyses the reaction XTP + H2O = XMP + diphosphate + H(+). The catalysed reaction is dITP + H2O = dIMP + diphosphate + H(+). The enzyme catalyses ITP + H2O = IMP + diphosphate + H(+). Pyrophosphatase that catalyzes the hydrolysis of nucleoside triphosphates to their monophosphate derivatives, with a high preference for the non-canonical purine nucleotides XTP (xanthosine triphosphate), dITP (deoxyinosine triphosphate) and ITP. Seems to function as a house-cleaning enzyme that removes non-canonical purine nucleotides from the nucleotide pool, thus preventing their incorporation into DNA/RNA and avoiding chromosomal lesions. This Streptococcus pyogenes serotype M6 (strain ATCC BAA-946 / MGAS10394) protein is dITP/XTP pyrophosphatase.